We begin with the raw amino-acid sequence, 104 residues long: MKSLLPLAILAALAVATLCYESHESMESYEISPFINRRNANTFMSPQQRWRAKAQKRVQERNKPAYEINREACDDYKLCERYAMVYGYNAAYNRYFRQRRGAKY.

The signal sequence occupies residues 1–19; sequence MKSLLPLAILAALAVATLC. E21 is subject to 4-carboxyglutamate. 3 positions are modified to phosphoserine: S22, S25, and S28. The Gla domain maps to 51-97; sequence RAKAQKRVQERNKPAYEINREACDDYKLCERYAMVYGYNAAYNRYFR. E60, E67, and E71 each carry 4-carboxyglutamate. C73 and C79 are oxidised to a cystine.

It belongs to the osteocalcin/matrix Gla protein family. In terms of processing, requires vitamin K-dependent gamma-carboxylation for its function.

The protein localises to the secreted. In terms of biological role, associates with the organic matrix of bone and cartilage. Thought to act as an inhibitor of bone formation. The protein is Matrix Gla protein (Mgp) of Mus musculus (Mouse).